The chain runs to 170 residues: Cyclic pyranopterin monophosphate synthase (170 aa).

The tract at residues 1 to 25 (MADPSTLTHPDPEGGVRMMDASQKS) is disordered. Substrate-binding positions include 78–80 (LCH) and 116–117 (ME). Asp-131 is a catalytic residue.

This sequence belongs to the MoaC family. In terms of assembly, homohexamer; trimer of dimers.

It carries out the reaction (8S)-3',8-cyclo-7,8-dihydroguanosine 5'-triphosphate = cyclic pyranopterin phosphate + diphosphate. The protein operates within cofactor biosynthesis; molybdopterin biosynthesis. Catalyzes the conversion of (8S)-3',8-cyclo-7,8-dihydroguanosine 5'-triphosphate to cyclic pyranopterin monophosphate (cPMP). In Salinibacter ruber (strain DSM 13855 / M31), this protein is Cyclic pyranopterin monophosphate synthase.